A 501-amino-acid polypeptide reads, in one-letter code: Glucans biosynthesis protein G (501 aa).

The signal sequence occupies residues 1–25 (MNRRQVLTGLAALPLLQAKPDPAAA).

This sequence belongs to the OpgD/OpgG family.

Its subcellular location is the periplasm. It functions in the pathway glycan metabolism; osmoregulated periplasmic glucan (OPG) biosynthesis. Functionally, involved in the biosynthesis of osmoregulated periplasmic glucans (OPGs). The polypeptide is Glucans biosynthesis protein G (Rhodopseudomonas palustris (strain ATCC BAA-98 / CGA009)).